The chain runs to 194 residues: Imidazoleglycerol-phosphate dehydratase (194 aa).

It belongs to the imidazoleglycerol-phosphate dehydratase family.

The protein localises to the cytoplasm. The catalysed reaction is D-erythro-1-(imidazol-4-yl)glycerol 3-phosphate = 3-(imidazol-4-yl)-2-oxopropyl phosphate + H2O. The protein operates within amino-acid biosynthesis; L-histidine biosynthesis; L-histidine from 5-phospho-alpha-D-ribose 1-diphosphate: step 6/9. This chain is Imidazoleglycerol-phosphate dehydratase, found in Listeria monocytogenes serovar 1/2a (strain ATCC BAA-679 / EGD-e).